Here is a 198-residue protein sequence, read N- to C-terminus: Dephospho-CoA kinase (198 aa).

Residues 3 to 198 (VVGLTGGIGA…HRRYSLLAAA (196 aa)) enclose the DPCK domain. 11–16 (GAGKST) lines the ATP pocket.

The protein belongs to the CoaE family.

Its subcellular location is the cytoplasm. It carries out the reaction 3'-dephospho-CoA + ATP = ADP + CoA + H(+). The protein operates within cofactor biosynthesis; coenzyme A biosynthesis; CoA from (R)-pantothenate: step 5/5. Its function is as follows. Catalyzes the phosphorylation of the 3'-hydroxyl group of dephosphocoenzyme A to form coenzyme A. This Methylococcus capsulatus (strain ATCC 33009 / NCIMB 11132 / Bath) protein is Dephospho-CoA kinase.